Here is a 174-residue protein sequence, read N- to C-terminus: Pediocin PA-1 biosynthesis protein PedC (174 aa).

Its function is as follows. Probably involved in pediocin PA-1 biosynthesis. The protein is Pediocin PA-1 biosynthesis protein PedC (pedC) of Pediococcus acidilactici.